A 494-amino-acid polypeptide reads, in one-letter code: Glycerol kinase (494 aa).

Residue Thr12 participates in ADP binding. Residues Thr12, Thr13, and Ser14 each coordinate ATP. Thr12 provides a ligand contact to sn-glycerol 3-phosphate. Arg16 serves as a coordination point for ADP. The sn-glycerol 3-phosphate site is built by Arg82, Glu83, Tyr135, and Asp244. Arg82, Glu83, Tyr135, Asp244, and Gln245 together coordinate glycerol. ADP contacts are provided by Thr266 and Gly309. The ATP site is built by Thr266, Gly309, Gln313, and Gly409. Residues Gly409 and Asn413 each coordinate ADP.

Belongs to the FGGY kinase family.

The catalysed reaction is glycerol + ATP = sn-glycerol 3-phosphate + ADP + H(+). Its pathway is polyol metabolism; glycerol degradation via glycerol kinase pathway; sn-glycerol 3-phosphate from glycerol: step 1/1. Its activity is regulated as follows. Inhibited by fructose 1,6-bisphosphate (FBP). Functionally, key enzyme in the regulation of glycerol uptake and metabolism. Catalyzes the phosphorylation of glycerol to yield sn-glycerol 3-phosphate. This chain is Glycerol kinase, found in Alteromonas mediterranea (strain DSM 17117 / CIP 110805 / LMG 28347 / Deep ecotype).